We begin with the raw amino-acid sequence, 463 residues long: MSPQQEPTAQPPRRHRVVIIGSGFGGLNAAKKLKRADVDIKLIARTTHHLFQPLLYQVATGIISEGEIAPPTRVVLRKQRNVQVLLGNVTHIDLAGQCVVSELLGHTYQTPYDSLIVAAGAGQSYFGNDHFAEFAPGMKSIDDALELRGRILSAFEQAERSSDPERRAKLLTFTVVGAGPTGVEMAGQIAELAEHTLKGAFRHIDSTKARVILLDAAPAVLPPMGAKLGQRAAARLQKLGVEIQLGAMVTDVDRNGITVKDSDGTVRRIESACKVWSAGVSASRLGRDLAEQSRVELDRAGRVQVLPDLSIPGYPNVFVVGDMAAVEGVPGVAQGAIQGAKYVASTIKAELAGANPAEREPFQYFDKGSMATVSRFSAVAKIGPVEFSGFIAWLIWLVLHLAYLIGFKTKITTLLSWTVTFLSTRRGQLTITDQQAFARTRLEQLAELAAEAQGSAASAKVAS.

FAD is bound by residues 21-25 (GSGFG) and Val-89. Residue Glu-184 is part of the active site. FAD-binding positions include Asp-322 and 333–334 (AQ). A helical transmembrane segment spans residues 387-407 (FSGFIAWLIWLVLHLAYLIGF).

This sequence belongs to the NADH dehydrogenase family. It depends on FAD as a cofactor.

It is found in the cell inner membrane. It carries out the reaction a quinone + NADH + H(+) = a quinol + NAD(+). It catalyses the reaction a menaquinone + NADH + H(+) = a menaquinol + NAD(+). The catalysed reaction is a ubiquinone + NADH + H(+) = a ubiquinol + NAD(+). With respect to regulation, inhibited by phenothiazine analogs. Inhibited by 2-mercapto-quinazolinones. Not inhibited by classic inhibitors of type I NADH dehydrogenase, such as rotenone, piericidin A and pyridaben. In terms of biological role, alternative, nonproton pumping NADH:quinone oxidoreductase that delivers electrons to the respiratory chain by oxidation of NADH and reduction of quinones. Ndh is probably the main NADH dehydrogenase of M.tuberculosis. The sequence is that of Type II NADH:quinone oxidoreductase Ndh from Mycobacterium tuberculosis (strain ATCC 25618 / H37Rv).